The following is a 293-amino-acid chain: Small ribosomal subunit biogenesis GTPase RsgA (293 aa).

Positions 63 to 223 (KNELVRPPIA…VADTPGFSSL (161 aa)) constitute a CP-type G domain. GTP is bound by residues 112–115 (SKMD) and 166–174 (GQSGVGKSS). Zn(2+) contacts are provided by cysteine 247, cysteine 252, histidine 254, and cysteine 260.

This sequence belongs to the TRAFAC class YlqF/YawG GTPase family. RsgA subfamily. In terms of assembly, monomer. Associates with 30S ribosomal subunit, binds 16S rRNA. Requires Zn(2+) as cofactor.

The protein localises to the cytoplasm. In terms of biological role, one of several proteins that assist in the late maturation steps of the functional core of the 30S ribosomal subunit. Helps release RbfA from mature subunits. May play a role in the assembly of ribosomal proteins into the subunit. Circularly permuted GTPase that catalyzes slow GTP hydrolysis, GTPase activity is stimulated by the 30S ribosomal subunit. The polypeptide is Small ribosomal subunit biogenesis GTPase RsgA (Bacillus cereus (strain ATCC 14579 / DSM 31 / CCUG 7414 / JCM 2152 / NBRC 15305 / NCIMB 9373 / NCTC 2599 / NRRL B-3711)).